The sequence spans 397 residues: 2,3-bisphosphoglycerate-independent phosphoglycerate mutase (397 aa).

This sequence belongs to the BPG-independent phosphoglycerate mutase family. A-PGAM subfamily.

The catalysed reaction is (2R)-2-phosphoglycerate = (2R)-3-phosphoglycerate. It functions in the pathway carbohydrate degradation; glycolysis; pyruvate from D-glyceraldehyde 3-phosphate: step 3/5. In terms of biological role, catalyzes the interconversion of 2-phosphoglycerate and 3-phosphoglycerate. This is 2,3-bisphosphoglycerate-independent phosphoglycerate mutase from Methanosarcina acetivorans (strain ATCC 35395 / DSM 2834 / JCM 12185 / C2A).